We begin with the raw amino-acid sequence, 232 residues long: Large ribosomal subunit protein uL1 (232 aa).

The protein belongs to the universal ribosomal protein uL1 family. In terms of assembly, part of the 50S ribosomal subunit.

Binds directly to 23S rRNA. The L1 stalk is quite mobile in the ribosome, and is involved in E site tRNA release. Functionally, protein L1 is also a translational repressor protein, it controls the translation of the L11 operon by binding to its mRNA. This Burkholderia cenocepacia (strain HI2424) protein is Large ribosomal subunit protein uL1.